The primary structure comprises 64 residues: MKIAEIKELATKELQERLDAEVAAYDQMRINHAVSPLDSPAKLKHQRRMIAQMKTVLRQRELNK.

Belongs to the universal ribosomal protein uL29 family.

The polypeptide is Large ribosomal subunit protein uL29 (Porphyromonas gingivalis (strain ATCC 33277 / DSM 20709 / CIP 103683 / JCM 12257 / NCTC 11834 / 2561)).